The following is a 940-amino-acid chain: Bifunctional uridylyltransferase/uridylyl-removing enzyme (940 aa).

The tract at residues 1–379 (MPRRLRPTRL…PGARPKRKAL (379 aa)) is uridylyltransferase. Residues 380 to 736 (DVEGFYEDGG…GQVRPGSNAA (357 aa)) form a uridylyl-removing region. The 123-residue stretch at 496–618 (VDEHTLRAVG…VENPERLRLL (123 aa)) folds into the HD domain. ACT domains are found at residues 737–821 (EVVI…PRRG) and 848–929 (VVEA…AARP).

It belongs to the GlnD family. Mg(2+) serves as cofactor.

The catalysed reaction is [protein-PII]-L-tyrosine + UTP = [protein-PII]-uridylyl-L-tyrosine + diphosphate. The enzyme catalyses [protein-PII]-uridylyl-L-tyrosine + H2O = [protein-PII]-L-tyrosine + UMP + H(+). Its activity is regulated as follows. Uridylyltransferase (UTase) activity is inhibited by glutamine, while glutamine activates uridylyl-removing (UR) activity. Functionally, modifies, by uridylylation and deuridylylation, the PII regulatory proteins (GlnB and homologs), in response to the nitrogen status of the cell that GlnD senses through the glutamine level. Under low glutamine levels, catalyzes the conversion of the PII proteins and UTP to PII-UMP and PPi, while under higher glutamine levels, GlnD hydrolyzes PII-UMP to PII and UMP (deuridylylation). Thus, controls uridylylation state and activity of the PII proteins, and plays an important role in the regulation of nitrogen assimilation and metabolism. In Caulobacter vibrioides (strain ATCC 19089 / CIP 103742 / CB 15) (Caulobacter crescentus), this protein is Bifunctional uridylyltransferase/uridylyl-removing enzyme.